A 156-amino-acid chain; its full sequence is ATP synthase subunit b (156 aa).

A helical membrane pass occupies residues 7 to 26 (LIGQAIWFALFIWITMKYVW).

This sequence belongs to the ATPase B chain family. In terms of assembly, F-type ATPases have 2 components, F(1) - the catalytic core - and F(0) - the membrane proton channel. F(1) has five subunits: alpha(3), beta(3), gamma(1), delta(1), epsilon(1). F(0) has three main subunits: a(1), b(2) and c(10-14). The alpha and beta chains form an alternating ring which encloses part of the gamma chain. F(1) is attached to F(0) by a central stalk formed by the gamma and epsilon chains, while a peripheral stalk is formed by the delta and b chains.

It localises to the cell inner membrane. Its function is as follows. F(1)F(0) ATP synthase produces ATP from ADP in the presence of a proton or sodium gradient. F-type ATPases consist of two structural domains, F(1) containing the extramembraneous catalytic core and F(0) containing the membrane proton channel, linked together by a central stalk and a peripheral stalk. During catalysis, ATP synthesis in the catalytic domain of F(1) is coupled via a rotary mechanism of the central stalk subunits to proton translocation. Functionally, component of the F(0) channel, it forms part of the peripheral stalk, linking F(1) to F(0). The protein is ATP synthase subunit b of Dechloromonas aromatica (strain RCB).